Here is a 208-residue protein sequence, read N- to C-terminus: Small ribosomal subunit protein uS4 (208 aa).

The S4 RNA-binding domain maps to 97 to 158 (TRLDNVIYRM…RAQKYLCVQE (62 aa)).

Belongs to the universal ribosomal protein uS4 family. As to quaternary structure, part of the 30S ribosomal subunit. Contacts protein S5. The interaction surface between S4 and S5 is involved in control of translational fidelity.

In terms of biological role, one of the primary rRNA binding proteins, it binds directly to 16S rRNA where it nucleates assembly of the body of the 30S subunit. Its function is as follows. With S5 and S12 plays an important role in translational accuracy. This chain is Small ribosomal subunit protein uS4, found in Xylella fastidiosa (strain M12).